A 147-amino-acid chain; its full sequence is MVEWTAAERRHVEAVWSKIDIDVCGPLALQRCLIVYPWTQRYFGEFGDLSTDAAIVGNPKVAAHGVVALTGLRTALDHMDEIKSTYAALSVLHSEKLHVDPDNFRLLCECLTIVVAGKMGKKLSPEMQAAWQKYLCAVVSALGRQYH.

In terms of domain architecture, Globin spans 3-147 (EWTAAERRHV…VVSALGRQYH (145 aa)). Residues His-64 and His-93 each contribute to the heme b site.

The protein belongs to the globin family. In terms of assembly, hb 1 is a heterotetramer of two alpha-1 and two beta-1 chains. Red blood cells.

In terms of biological role, involved in oxygen transport from gills to the various peripheral tissues. In Gadus morhua (Atlantic cod), this protein is Hemoglobin subunit beta-1 (hbb1).